Reading from the N-terminus, the 446-residue chain is Baeyer-Villiger monooxygenase dmxR6 (446 aa).

This sequence belongs to the AflY oxidoreductase family.

Its pathway is secondary metabolite biosynthesis. Functionally, baeyer-Villiger monooxygenase; part of the gene cluster that mediates the biosynthesis of the dimeric xanthones cryptosporioptides. The pathway begins with the synthesis of atrochrysone thioester by the polyketide synthase dmx-nrPKS. The atrochrysone carboxyl ACP thioesterase dmxR1 then breaks the thioester bond and releases the atrochrysone carboxylic acid from dmx-nrPKS. Atrochrysone carboxylic acid is decarboxylated by the decarboxylase dmxR15, and oxidized by the anthrone oxygenase dmxR16 to yield emodin. Emodin is then reduced to emodin hydroquinone by the oxidoreductase dmxR7. A-ring reduction by the short chain dehydrogenase dmxR18, dehydration by the scytalone dehydratase-like protein dmxR17 and probable spontaneous re-oxidation, results in overall deoxygenation to chrysophanol. Baeyer-Villiger oxidation by the Baeyer-Villiger monooxygenase (BVMO) dmxR6 then yields monodictylactone in equilibrium with monodictyphenone. In the case of the cryptosporioptides biosynthesis, monodictylactone is reduced at C-12 to an alcohol (by the short chain dehydrogenases dmxR12 or dmxR8) and hydroxylated at C-5 by dmxR9, yielding the electron-rich aromatic which could eliminate H(2)O to form the ortho-quinonemethide, followed by tautomerisation to paraquinone and complete the formal reduction to produce the 10-methylgroup. Conjugate addition of C-4a-OH to the resulting paraquinone by the monooxygenase dmxR10 then gives cyclohexadienone, which is then reduced at C-5 by the short chain dehydrogenase dmxR3 to give the dihydroxanthone. The 6,7-epoxide in the cryptosporioptides could be introduced by the cytochrome P450 monooxygenase dmxL3. The highly reducing PKS dmxL2 manufactures butyrate, which is further carboxylated by dmxL1 to form ethylmalonate. It is not yet clear whether the carboxylation occurs while the butyrate is attached to the ACP of dmxL2, but this unusual fungal metabolite could then be esterified to O-5 by the O-acetyltransferase dmxR13. Finally, dimerization performed by dmxR5 gives the observed dimers cryptosporioptides A, B and C as the final products of the pathway. This chain is Baeyer-Villiger monooxygenase dmxR6, found in Cryptosporiopsis sp. (strain 8999).